Reading from the N-terminus, the 178-residue chain is ATP synthase subunit delta (178 aa).

The protein belongs to the ATPase delta chain family. F-type ATPases have 2 components, F(1) - the catalytic core - and F(0) - the membrane proton channel. F(1) has five subunits: alpha(3), beta(3), gamma(1), delta(1), epsilon(1). F(0) has three main subunits: a(1), b(2) and c(10-14). The alpha and beta chains form an alternating ring which encloses part of the gamma chain. F(1) is attached to F(0) by a central stalk formed by the gamma and epsilon chains, while a peripheral stalk is formed by the delta and b chains.

The protein localises to the cell inner membrane. Functionally, f(1)F(0) ATP synthase produces ATP from ADP in the presence of a proton or sodium gradient. F-type ATPases consist of two structural domains, F(1) containing the extramembraneous catalytic core and F(0) containing the membrane proton channel, linked together by a central stalk and a peripheral stalk. During catalysis, ATP synthesis in the catalytic domain of F(1) is coupled via a rotary mechanism of the central stalk subunits to proton translocation. In terms of biological role, this protein is part of the stalk that links CF(0) to CF(1). It either transmits conformational changes from CF(0) to CF(1) or is implicated in proton conduction. This chain is ATP synthase subunit delta, found in Thioalkalivibrio sulfidiphilus (strain HL-EbGR7).